The following is a 148-amino-acid chain: Cofilin/actin-depolymerizing factor homolog (148 aa).

The ADF-H domain maps to 4-143; the sequence is GVTVSDVCKT…SREAVEEKLR (140 aa). The Nuclear localization signal signature appears at 19–23; the sequence is KKDKK.

Belongs to the actin-binding proteins ADF family. In terms of processing, phosphorylated in vitro by protein kinase LIMK1. Phosphorylation is required for inactivation of tsr and for cell proliferation and axon growth. Phosphorylation is negatively regulated by the panthothenate kinase fbl which catalyzes the first step in the conversion of panthothenic acid to coenzyme A. Dephosphorylated by protein phosphatase ssh which activates tsr.

Its subcellular location is the cytoplasm. The protein resides in the cytoskeleton. It is found in the nucleus matrix. Its function is as follows. Exhibits F-actin depolymerizing activity and regulates actin cytoskeleton dynamics. Required for cytokinesis in both mitotic and meiotic cells and for aster migration and separation. Promotes cell motility during ovary development and oogenesis. During larval development, required for the cell rearrangement needed for formation of terminal filaments which are stacks of somatic cells that are important for the initiation of ovarioles. Also required for border cell migration during oogenesis. During border cell migration, required for actin turnover and lamellipodial protrusion. Required for the establishment of planar cell polarity (PCP) where cells adopt a uniform orientation within the plane of an epithelium. During establishment of PCP, required for the redistribution of the PCP core proteins fz and stan/fmi to the proximodistal cell boundary. During pupal development, required for elongation of the retinal cell body and for rhabdomere morphogenesis. Required for mushroom body neuroblast proliferation and axon growth. Plays a role in the positive regulation of protein secretion. Plays a role in the regulation of nuclear localization of actin. Required for the maintenance of epithelial integrity by controlling cell junctions and is also necessary for cell survival and tissue growth through regulation of JNK and yki signaling. In Drosophila melanogaster (Fruit fly), this protein is Cofilin/actin-depolymerizing factor homolog.